Consider the following 1108-residue polypeptide: Folliculin-interacting protein 2 (1108 aa).

The uDENN FNIP1/2-type domain maps to 38–456 (FGLSDIRLLV…TVMPVDHPPI (419 aa)). Disordered regions lie at residues 89-112 (QESSSSSGSSSSGSSSSHGFGGSL), 209-233 (RTGSNLAHSTPVDMPSRGQNEDRDS), 598-635 (SEGVNTSELGHKPEKNRCKRPEQNSEASSMGFQEAEPD), and 649-671 (QNDQEATQDCSSSPPSCEVPRVR). Positions 91–106 (SSSSSGSSSSGSSSSH) are enriched in low complexity. Phosphoserine is present on residues S212 and S217. The 571-residue stretch at 464 to 1034 (TSQSVNMLAK…VSSLLQSILQ (571 aa)) folds into the cDENN FNIP1/2-type domain. Positions 540-905 (DDQVINGSKI…DEACVLALLE (366 aa)) are interaction with PRKAA1. The segment covering 606–620 (LGHKPEKNRCKRPEQ) has biased composition (basic and acidic residues). Residues 652 to 663 (QEATQDCSSSPP) are compositionally biased toward polar residues. Phosphoserine occurs at positions 720, 721, and 723. The 56-residue stretch at 1044–1099 (FCIMHLEDRLQEMYLKSKMLSEYLRGHTRVHVKELSVVLGIESNDLPLLTAIASTH) folds into the dDENN FNIP1/2-type domain.

Belongs to the FNIP family. As to quaternary structure, homodimer and homomultimer. Heterodimer and heteromultimer with FNIP1. Interacts (via C-terminus) with FLCN (via C-terminus). Phosphorylated FLCN is preferentially bound. Component of the lysosomal folliculin complex (LFC), composed of FLCN, FNIP1 (or FNIP2), RagA/RRAGA or RagB/RRAGB GDP-bound, RagC/RRAGC or RagD/RRAGD GTP-bound, and Ragulator. Interacts with PRKAA1, PRKAB1 and PRKAG1 subunits of 5'-AMP-activated protein kinase. Interacts with HSP70, HSP90AA1, STIP1, PTGES3, CDC37, BRAF, GCR and CDK4. In terms of processing, phosphorylated by AMPK.

Its subcellular location is the lysosome membrane. The protein resides in the cytoplasm. Functionally, binding partner of the GTPase-activating protein FLCN: involved in the cellular response to amino acid availability by regulating the non-canonical mTORC1 signaling cascade controlling the MiT/TFE factors TFEB and TFE3. Required to promote FLCN recruitment to lysosomes and interaction with Rag GTPases, leading to activation of the non-canonical mTORC1 signaling. In low-amino acid conditions, component of the lysosomal folliculin complex (LFC) on the membrane of lysosomes, which inhibits the GTPase-activating activity of FLCN, thereby inactivating mTORC1 and promoting nuclear translocation of TFEB and TFE3. Upon amino acid restimulation, disassembly of the LFC complex liberates the GTPase-activating activity of FLCN, leading to activation of mTORC1 and subsequent inactivation of TFEB and TFE3. Together with FLCN, regulates autophagy: following phosphorylation by ULK1, interacts with GABARAP and promotes autophagy. In addition to its role in mTORC1 signaling, also acts as a co-chaperone of HSP90AA1/Hsp90: inhibits the ATPase activity of HSP90AA1/Hsp90, leading to activate both kinase and non-kinase client proteins of HSP90AA1/Hsp90. Acts as a scaffold to load client protein FLCN onto HSP90AA1/Hsp90. Competes with the activating co-chaperone AHSA1 for binding to HSP90AA1, thereby providing a reciprocal regulatory mechanism for chaperoning of client proteins. May play a role in the signal transduction pathway of apoptosis induced by O6-methylguanine-mispaired lesions. This Mus musculus (Mouse) protein is Folliculin-interacting protein 2.